The following is a 239-amino-acid chain: MLTRKQQELLLFIHERMKESGVPPSFDEMKDALDLASKSGIHRLITALEERGFIRRLPNRARALEVIKLPEAYSPSIQPRRGFSPSVIEGSLGKPQPVATPAPAKSVADNGNSVSVPVMGRIAAGVPISAIQNNTHDIVVPADMLGSGEHYALEVKGDSMIDAGIFDGDTVIIRNGSTASPGDIVVALVDDEEATLKRFRRKGASIALEAANPAYETRIFGPDRVKVQGKLVGLIRRYH.

The H-T-H motif DNA-binding region spans 26–46 (FDEMKDALDLASKSGIHRLIT). A disordered region spans residues 84–107 (SPSVIEGSLGKPQPVATPAPAKSV). Residues S159 and K197 each act as for autocatalytic cleavage activity in the active site.

Belongs to the peptidase S24 family. In terms of assembly, homodimer.

The enzyme catalyses Hydrolysis of Ala-|-Gly bond in repressor LexA.. Represses a number of genes involved in the response to DNA damage (SOS response), including recA and lexA. In the presence of single-stranded DNA, RecA interacts with LexA causing an autocatalytic cleavage which disrupts the DNA-binding part of LexA, leading to derepression of the SOS regulon and eventually DNA repair. The chain is LexA repressor from Rhizobium johnstonii (strain DSM 114642 / LMG 32736 / 3841) (Rhizobium leguminosarum bv. viciae).